The sequence spans 634 residues: Mitochondrial Rho GTPase 1 (634 aa).

Residues 1–604 are Cytoplasmic-facing; it reads MLCCMRICVC…PRSEEDVEGK (604 aa). The region spanning 2–171 is the Miro 1 domain; sequence LCCMRICVCG…FFLCQKAVTH (170 aa). Residues 11–18, 60–64, and 116–119 contribute to the GTP site; these read GDEGTGKS, DTSAV, and NKSD. EF-hand domains are found at residues 187–222 and 307–342; these read AAVA…CFEK and EGYR…TPGL. 9 residues coordinate Ca(2+): D200, D202, D204, Y206, E211, D320, D322, D324, and E331. The interval 399-419 is disordered; it reads NPSTTAALKVTRPRKRRKRPG. Basic residues predominate over residues 409–419; that stretch reads TRPRKRRKRPG. Residues 423 to 589 form the Miro 2 domain; that stretch reads RNVVLGHIVG…FVHIAEAAME (167 aa). GTP-binding positions include 432-439, 468-472, and 538-541; these read GAPGSGKS, ELPGG, and LKAD. The helical; Anchor for type IV membrane protein transmembrane segment at 605-625 threads the bilayer; the sequence is WMSWGIALGAVVCAGAAAVMI. The Mitochondrial intermembrane portion of the chain corresponds to 626-634; sequence WRRVSGSGV.

The protein belongs to the mitochondrial Rho GTPase family.

It is found in the mitochondrion outer membrane. Mitochondrial GTPase involved in mitochondrial trafficking. Probably involved in control of anterograde transport of mitochondria and their subcellular distribution. The chain is Mitochondrial Rho GTPase 1 (gem1) from Emericella nidulans (strain FGSC A4 / ATCC 38163 / CBS 112.46 / NRRL 194 / M139) (Aspergillus nidulans).